Consider the following 315-residue polypeptide: Lipase 3 (315 aa).

Residues 1 to 18 (MLLKRLGLAALFSLSMVG) form the signal peptide. A lipid anchor (N-palmitoyl cysteine) is attached at Cys-19. Cys-19 carries S-diacylglycerol cysteine lipidation. The AB hydrolase-1 domain occupies 69-296 (PLLLIHGFGG…MNDVGHVPMV (228 aa)). The active site involves His-74. Ser-142 serves as the catalytic Charge relay system.

The protein belongs to the lipase/esterase LIP3/BchO family.

Its subcellular location is the cell membrane. It catalyses the reaction a triacylglycerol + H2O = a diacylglycerol + a fatty acid + H(+). The polypeptide is Lipase 3 (lip3) (Moraxella sp. (strain TA144)).